Reading from the N-terminus, the 240-residue chain is Spore coat polysaccharide biosynthesis protein SpsF (240 aa).

The protein belongs to the CMP-NeuNAc synthase family.

It functions in the pathway spore coat biogenesis; spore coat polysaccharide biosynthesis. The sequence is that of Spore coat polysaccharide biosynthesis protein SpsF (spsF) from Bacillus subtilis (strain 168).